Consider the following 119-residue polypeptide: Large ribosomal subunit protein uL18 (119 aa).

Residues 1 to 10 (MKKIKEAEQR) are compositionally biased toward basic and acidic residues. The tract at residues 1–20 (MKKIKEAEQRKLRRKKRIKD) is disordered.

It belongs to the universal ribosomal protein uL18 family. As to quaternary structure, part of the 50S ribosomal subunit; part of the 5S rRNA/L5/L18/L25 subcomplex. Contacts the 5S and 23S rRNAs.

In terms of biological role, this is one of the proteins that bind and probably mediate the attachment of the 5S RNA into the large ribosomal subunit, where it forms part of the central protuberance. In Borreliella burgdorferi (strain ATCC 35210 / DSM 4680 / CIP 102532 / B31) (Borrelia burgdorferi), this protein is Large ribosomal subunit protein uL18.